We begin with the raw amino-acid sequence, 347 residues long: UPF0284 protein M1627_0030 (347 aa).

The protein belongs to the UPF0284 family.

The protein is UPF0284 protein M1627_0030 of Saccharolobus islandicus (strain M.16.27) (Sulfolobus islandicus).